A 339-amino-acid polypeptide reads, in one-letter code: Ketol-acid reductoisomerase (NADP(+)) (339 aa).

Residues 1–182 form the KARI N-terminal Rossmann domain; sequence MRVYYDRDAD…GGGRAGIIET (182 aa). NADP(+) contacts are provided by residues 24 to 27, Arg48, Ser51, Ser53, and 83 to 86; these read YGSQ and DELQ. His108 is a catalytic residue. Gly134 is a binding site for NADP(+). The 146-residue stretch at 183–328 folds into the KARI C-terminal knotted domain; that stretch reads TFREECETDL…ARLRDMMPWI (146 aa). Mg(2+) is bound by residues Asp191, Glu195, Glu227, and Glu231. Ser252 provides a ligand contact to substrate.

This sequence belongs to the ketol-acid reductoisomerase family. Requires Mg(2+) as cofactor.

The enzyme catalyses (2R)-2,3-dihydroxy-3-methylbutanoate + NADP(+) = (2S)-2-acetolactate + NADPH + H(+). It catalyses the reaction (2R,3R)-2,3-dihydroxy-3-methylpentanoate + NADP(+) = (S)-2-ethyl-2-hydroxy-3-oxobutanoate + NADPH + H(+). It functions in the pathway amino-acid biosynthesis; L-isoleucine biosynthesis; L-isoleucine from 2-oxobutanoate: step 2/4. The protein operates within amino-acid biosynthesis; L-valine biosynthesis; L-valine from pyruvate: step 2/4. Involved in the biosynthesis of branched-chain amino acids (BCAA). Catalyzes an alkyl-migration followed by a ketol-acid reduction of (S)-2-acetolactate (S2AL) to yield (R)-2,3-dihydroxy-isovalerate. In the isomerase reaction, S2AL is rearranged via a Mg-dependent methyl migration to produce 3-hydroxy-3-methyl-2-ketobutyrate (HMKB). In the reductase reaction, this 2-ketoacid undergoes a metal-dependent reduction by NADPH to yield (R)-2,3-dihydroxy-isovalerate. In Nitrobacter winogradskyi (strain ATCC 25391 / DSM 10237 / CIP 104748 / NCIMB 11846 / Nb-255), this protein is Ketol-acid reductoisomerase (NADP(+)).